The primary structure comprises 126 residues: Transcription antitermination protein NusB (126 aa).

The protein belongs to the NusB family.

In terms of biological role, involved in transcription antitermination. Required for transcription of ribosomal RNA (rRNA) genes. Binds specifically to the boxA antiterminator sequence of the ribosomal RNA (rrn) operons. The sequence is that of Transcription antitermination protein NusB from Oceanobacillus iheyensis (strain DSM 14371 / CIP 107618 / JCM 11309 / KCTC 3954 / HTE831).